Reading from the N-terminus, the 270-residue chain is MVVSSAKIHPASVVEDGAVIGENVKVGPFCHIGPNVVLGDGVELLSHVVVIGRTTIGKGTKIFPGAVIGGDSQSVHHSAVDTTLVIGENCTIREGVTMNTGTVEHGGTTVVGNNNLFLAYSHVAHDCRLGNNIILSNNVMLAGHVTVEDRAILGGGSAVHQFTRVGKQAFIGGLSAVSYDVIPYGMLNGNPGVLSGLNVVGMTRAGFERPVIHAVRRCYKQIFEGPESIRANAAAVRDEYLDCPPAMEILDFIAAESDRALSSPNRGGKG.

The protein belongs to the transferase hexapeptide repeat family. LpxA subfamily. In terms of assembly, homotrimer.

The protein localises to the cytoplasm. It carries out the reaction a (3R)-hydroxyacyl-[ACP] + UDP-N-acetyl-alpha-D-glucosamine = a UDP-3-O-[(3R)-3-hydroxyacyl]-N-acetyl-alpha-D-glucosamine + holo-[ACP]. Its pathway is glycolipid biosynthesis; lipid IV(A) biosynthesis; lipid IV(A) from (3R)-3-hydroxytetradecanoyl-[acyl-carrier-protein] and UDP-N-acetyl-alpha-D-glucosamine: step 1/6. Involved in the biosynthesis of lipid A, a phosphorylated glycolipid that anchors the lipopolysaccharide to the outer membrane of the cell. The protein is Acyl-[acyl-carrier-protein]--UDP-N-acetylglucosamine O-acyltransferase of Sinorhizobium fredii (strain NBRC 101917 / NGR234).